Consider the following 782-residue polypeptide: LPS-assembly protein LptD (782 aa).

An N-terminal signal peptide occupies residues 1–23 (MNKKHTLISLAILTALYSQQSLA).

Belongs to the LptD family. In terms of assembly, component of the lipopolysaccharide transport and assembly complex. Interacts with LptE and LptA.

The protein resides in the cell outer membrane. Together with LptE, is involved in the assembly of lipopolysaccharide (LPS) at the surface of the outer membrane. This is LPS-assembly protein LptD from Haemophilus influenzae (strain ATCC 51907 / DSM 11121 / KW20 / Rd).